The following is a 224-amino-acid chain: Deoxyribose-phosphate aldolase (224 aa).

Catalysis depends on Asp-93, which acts as the Proton donor/acceptor. The active-site Schiff-base intermediate with acetaldehyde is Lys-159. The active-site Proton donor/acceptor is Lys-189.

Belongs to the DeoC/FbaB aldolase family. DeoC type 1 subfamily.

The protein localises to the cytoplasm. The enzyme catalyses 2-deoxy-D-ribose 5-phosphate = D-glyceraldehyde 3-phosphate + acetaldehyde. It functions in the pathway carbohydrate degradation; 2-deoxy-D-ribose 1-phosphate degradation; D-glyceraldehyde 3-phosphate and acetaldehyde from 2-deoxy-alpha-D-ribose 1-phosphate: step 2/2. Functionally, catalyzes a reversible aldol reaction between acetaldehyde and D-glyceraldehyde 3-phosphate to generate 2-deoxy-D-ribose 5-phosphate. In Mycobacterium bovis (strain ATCC BAA-935 / AF2122/97), this protein is Deoxyribose-phosphate aldolase.